A 489-amino-acid polypeptide reads, in one-letter code: Rhamnulokinase (489 aa).

13–17 (ASSGR) provides a ligand contact to ATP. Cysteine 68 and cysteine 222 are joined by a disulfide. Substrate is bound by residues glycine 83 and 236-238 (HDT). The active-site Proton acceptor is the aspartate 237. Threonine 259 lines the ATP pocket. Asparagine 296 contacts substrate. An ATP-binding site is contributed by glutamine 304. Cysteine 353 and cysteine 370 are joined by a disulfide. Glycine 402 lines the ATP pocket. Residues cysteine 413 and cysteine 417 are joined by a disulfide bond.

It belongs to the rhamnulokinase family. As to quaternary structure, monomer. Mg(2+) is required as a cofactor.

The enzyme catalyses L-rhamnulose + ATP = L-rhamnulose 1-phosphate + ADP + H(+). Its pathway is carbohydrate degradation; L-rhamnose degradation; glycerone phosphate from L-rhamnose: step 2/3. In terms of biological role, involved in the catabolism of L-rhamnose (6-deoxy-L-mannose). Catalyzes the transfer of the gamma-phosphate group from ATP to the 1-hydroxyl group of L-rhamnulose to yield L-rhamnulose 1-phosphate. The polypeptide is Rhamnulokinase (Escherichia coli O127:H6 (strain E2348/69 / EPEC)).